The chain runs to 176 residues: Japanin (176 aa).

The N-terminal stretch at 1 to 24 is a signal peptide; that stretch reads MKVLRCLVCSFYIIVSLITTMTIG. Glutamate 47 contacts cholesterol. Intrachain disulfides connect cysteine 52/cysteine 174 and cysteine 138/cysteine 162. 2 N-linked (GlcNAc...) asparagine glycosylation sites follow: asparagine 59 and asparagine 155.

Belongs to the calycin superfamily. Lipocalin family. As to quaternary structure, homodimer; non-disulfide-linked. Each monomer accommodates one molecule of cholesterol in a pocket. Expressed in salivary glands.

Its subcellular location is the secreted. Its function is as follows. Salivary tick protein that modulates host immune response. This protein blocks dendritic cell (DC) differentiation from monocytes. In addition, it inhibits up-regulation of costimulatory molecules and pro-inflammatory cytokines in response to stimuli and promotes up-regulation of co-inhibitory molecules and the anti-inflammatory cytokine interleukin-10. It has a pocket to accomodate cholesterol, which may have immune-modulatory roles, either directly or through interactions with the host gut microbiota. The protein is Japanin of Rhipicephalus appendiculatus (Brown ear tick).